A 140-amino-acid chain; its full sequence is uncharacterized protein (140 aa).

This is an uncharacterized protein from Escherichia coli (strain K12).